The following is a 461-amino-acid chain: Glycine--tRNA ligase (461 aa).

Substrate-binding residues include arginine 100 and glutamate 163. ATP-binding positions include 195 to 197 (RNE), 205 to 210 (FRTREF), 282 to 283 (EL), and 326 to 329 (GLGR). Position 210–214 (210–214 (FEQME)) interacts with substrate. 322–326 (EPAAG) lines the substrate pocket.

It belongs to the class-II aminoacyl-tRNA synthetase family. In terms of assembly, homodimer.

The protein resides in the cytoplasm. It catalyses the reaction tRNA(Gly) + glycine + ATP = glycyl-tRNA(Gly) + AMP + diphosphate. In terms of biological role, catalyzes the attachment of glycine to tRNA(Gly). The protein is Glycine--tRNA ligase of Corynebacterium glutamicum (strain ATCC 13032 / DSM 20300 / JCM 1318 / BCRC 11384 / CCUG 27702 / LMG 3730 / NBRC 12168 / NCIMB 10025 / NRRL B-2784 / 534).